A 227-amino-acid chain; its full sequence is Large ribosomal subunit protein uL3 (227 aa).

A disordered region spans residues 144 to 166; it reads RRGPMAHGSKNHRLPGSTGPGTT.

The protein belongs to the universal ribosomal protein uL3 family. Part of the 50S ribosomal subunit. Forms a cluster with proteins L14 and L19.

Functionally, one of the primary rRNA binding proteins, it binds directly near the 3'-end of the 23S rRNA, where it nucleates assembly of the 50S subunit. The polypeptide is Large ribosomal subunit protein uL3 (Trichodesmium erythraeum (strain IMS101)).